The primary structure comprises 179 residues: UPF0302 protein BLi02393/BL02764 (179 aa).

The protein belongs to the UPF0302 family.

The polypeptide is UPF0302 protein BLi02393/BL02764 (Bacillus licheniformis (strain ATCC 14580 / DSM 13 / JCM 2505 / CCUG 7422 / NBRC 12200 / NCIMB 9375 / NCTC 10341 / NRRL NRS-1264 / Gibson 46)).